A 252-amino-acid chain; its full sequence is Tabinhibitin 9 (252 aa).

The first 23 residues, 1-23, serve as a signal peptide directing secretion; that stretch reads MTSNLYYVLISPYSLAYMVQYRS. The short motif at 32–34 is the Cell attachment site element; the sequence is RGD. Residues 63 to 207 form the SCP domain; it reads YIRSTMCEIM…KARAFFTCNF (145 aa).

The protein belongs to the CRISP family. In terms of tissue distribution, expressed in salivary glands.

It localises to the secreted. Its function is as follows. Inhibits platelet aggregation induced by all agonists tested (ADP, arachidonic acid, the thromboxane A2 analog U46619, thrombin, and snake venom snaclecs (TMVA that activates platelet through GPIB, and stejnulxin that specifically acts through GPVI (GP6))). May act by competing with fibrinogen for binding to glycoprotein IIb/IIIa (ITGA2B/ITGB3). The polypeptide is Tabinhibitin 9 (Tabanus yao (Horsefly)).